The following is a 318-amino-acid chain: Mitochondrial coenzyme A transporter SLC25A42 (318 aa).

Solcar repeat units follow at residues 31–117 (RQVL…YKRI), 129–214 (LPPW…LKSL), and 224–312 (PYPF…MQIL). Helical transmembrane passes span 33–53 (VLSS…AVAP), 89–109 (LWRG…IQFS), 135–155 (LLAG…LDLV), 186–206 (LYFG…LSFF), 230–250 (MVFG…LDVV), and 293–313 (LKGP…QILL).

It belongs to the mitochondrial carrier (TC 2.A.29) family. As to expression, widely expressed. Highly expressed in adipose, followed by hypothalamus and brain coronal sections containing corpus callosum, fornix, thalamus, hypothalamus, optic chiasm, pons, midbrain, and cerebellum.

Its subcellular location is the mitochondrion inner membrane. It carries out the reaction ADP(out) + CoA(in) = ADP(in) + CoA(out). The enzyme catalyses 3'-dephospho-CoA(in) + ADP(out) = 3'-dephospho-CoA(out) + ADP(in). It catalyses the reaction adenosine 3',5'-bisphosphate(in) + ADP(out) = adenosine 3',5'-bisphosphate(out) + ADP(in). The catalysed reaction is AMP(in) + ADP(out) = AMP(out) + ADP(in). It carries out the reaction dADP(in) + ADP(out) = dADP(out) + ADP(in). The enzyme catalyses ADP(in) + ATP(out) = ADP(out) + ATP(in). Functionally, mitochondrial carrier mediating the transport of coenzyme A (CoA) in mitochondria in exchange for intramitochondrial (deoxy)adenine nucleotides and adenosine 3',5'-diphosphate. In Rattus norvegicus (Rat), this protein is Mitochondrial coenzyme A transporter SLC25A42 (Slc25a42).